A 480-amino-acid polypeptide reads, in one-letter code: Histone deacetylase 1 (480 aa).

The histone deacetylase stretch occupies residues 9–321 (RKVCYYYDGD…WTYETAVALD (313 aa)). The 1D-myo-inositol 1,4,5,6-tetrakisphosphate site is built by Gly27 and Lys31. Residue His141 is part of the active site. The Zn(2+) site is built by Asp176, His178, and Asp264. Residue Arg270 participates in 1D-myo-inositol 1,4,5,6-tetrakisphosphate binding. A disordered region spans residues 376-480 (APGVQMQPIP…KGVKEETKST (105 aa)). Over residues 388–400 (AVQEDSGDEEEED) the composition is skewed to acidic residues. The segment covering 401 to 416 (PEKRISIRNSDKRISC) has biased composition (basic and acidic residues). A compositionally biased stretch (acidic residues) spans 417 to 427 (DEEFSDSEDEG). Residues 455–480 (KDEKEEEKAKEEKAEPKGVKEETKST) show a composition bias toward basic and acidic residues.

The protein belongs to the histone deacetylase family. HD type 1 subfamily. Zn(2+) serves as cofactor.

The protein localises to the nucleus. The catalysed reaction is N(6)-acetyl-L-lysyl-[histone] + H2O = L-lysyl-[histone] + acetate. The enzyme catalyses N(6)-acetyl-L-lysyl-[protein] + H2O = L-lysyl-[protein] + acetate. It catalyses the reaction N(6)-(2E)-butenoyl-L-lysyl-[protein] + H2O = (2E)-2-butenoate + L-lysyl-[protein]. It carries out the reaction N(6)-[(S)-lactoyl]-L-lysyl-[protein] + H2O = (S)-lactate + L-lysyl-[protein]. Its activity is regulated as follows. Inositol tetraphosphate (1D-myo-inositol 1,4,5,6-tetrakisphosphate) may act as an intermolecular glue between HDAC1 and N-Cor repressor complex components. In terms of biological role, histone deacetylase that catalyzes the deacetylation of lysine residues on the N-terminal part of the core histones (H2A, H2B, H3 and H4). Histone deacetylation gives a tag for epigenetic repression and plays an important role in transcriptional regulation, cell cycle progression and developmental events. Histone deacetylases act via the formation of large multiprotein complexes. Also functions as a deacetylase for non-histone proteins. In addition to protein deacetylase activity, also has protein-lysine deacylase activity: acts as a protein decrotonylase and delactylase by mediating decrotonylation ((2E)-butenoyl) and delactylation (lactoyl) of histones, respectively. The sequence is that of Histone deacetylase 1 (HDAC1) from Gallus gallus (Chicken).